A 284-amino-acid chain; its full sequence is Serine/arginine-rich splicing factor RS2Z32 (284 aa).

Residues 11 to 81 (TRLYVGRLSS…SRITVEASRG (71 aa)) enclose the RRM domain. The interval 74-97 (ITVEASRGAPRGSRDNGSRGPPPG) is disordered. 2 CCHC-type zinc fingers span residues 99 to 116 (GRCFNCGVDGHWARDCTA) and 121 to 138 (NKCYRCGERGHIERNCKN). Residues 132-284 (IERNCKNSPS…RPSPKGSESP (153 aa)) form a disordered region. A compositionally biased stretch (basic residues) spans 159 to 180 (RSPRRRRSPSRSRSYSRGRSYS). Phosphoserine is present on residues Ser-166, Ser-168, and Ser-184. The segment covering 186-203 (VRREKSVEDRSRSPKAME) has biased composition (basic and acidic residues). Residues Ser-205, Ser-207, Ser-214, Ser-216, Ser-225, Ser-235, Ser-255, Ser-265, Ser-277, and Ser-281 each carry the phosphoserine modification. Over residues 209-236 (KGRDQSLSPDRKVIDASPKRGSDYDGSP) the composition is skewed to basic and acidic residues.

Belongs to the splicing factor SR family. RS2Z subfamily. In terms of assembly, component of the spliceosome. In terms of processing, extensively phosphorylated on serine residues in the RS domain.

It is found in the nucleus. In terms of biological role, probably involved in intron recognition and spliceosome assembly. This chain is Serine/arginine-rich splicing factor RS2Z32 (RS2Z32), found in Arabidopsis thaliana (Mouse-ear cress).